We begin with the raw amino-acid sequence, 409 residues long: 2,3-bisphosphoglycerate-independent phosphoglycerate mutase 1 (409 aa).

A compositionally biased stretch (basic and acidic residues) spans 163–173; that stretch reads SDADPKVEGKP. Residues 163–184 form a disordered region; the sequence is SDADPKVEGKPPKKIKALDGSP.

The protein belongs to the BPG-independent phosphoglycerate mutase family. A-PGAM subfamily.

It catalyses the reaction (2R)-2-phosphoglycerate = (2R)-3-phosphoglycerate. The protein operates within carbohydrate degradation; glycolysis; pyruvate from D-glyceraldehyde 3-phosphate: step 3/5. In terms of biological role, catalyzes the interconversion of 2-phosphoglycerate and 3-phosphoglycerate. The protein is 2,3-bisphosphoglycerate-independent phosphoglycerate mutase 1 (apgM1) of Methanothermobacter thermautotrophicus (strain ATCC 29096 / DSM 1053 / JCM 10044 / NBRC 100330 / Delta H) (Methanobacterium thermoautotrophicum).